We begin with the raw amino-acid sequence, 171 residues long: Crossover junction endodeoxyribonuclease RuvC (171 aa).

Catalysis depends on residues D11, E71, and D143. Mg(2+)-binding residues include D11, E71, and D143.

It belongs to the RuvC family. In terms of assembly, homodimer which binds Holliday junction (HJ) DNA. The HJ becomes 2-fold symmetrical on binding to RuvC with unstacked arms; it has a different conformation from HJ DNA in complex with RuvA. In the full resolvosome a probable DNA-RuvA(4)-RuvB(12)-RuvC(2) complex forms which resolves the HJ. It depends on Mg(2+) as a cofactor.

The protein localises to the cytoplasm. It carries out the reaction Endonucleolytic cleavage at a junction such as a reciprocal single-stranded crossover between two homologous DNA duplexes (Holliday junction).. Functionally, the RuvA-RuvB-RuvC complex processes Holliday junction (HJ) DNA during genetic recombination and DNA repair. Endonuclease that resolves HJ intermediates. Cleaves cruciform DNA by making single-stranded nicks across the HJ at symmetrical positions within the homologous arms, yielding a 5'-phosphate and a 3'-hydroxyl group; requires a central core of homology in the junction. The consensus cleavage sequence is 5'-(A/T)TT(C/G)-3'. Cleavage occurs on the 3'-side of the TT dinucleotide at the point of strand exchange. HJ branch migration catalyzed by RuvA-RuvB allows RuvC to scan DNA until it finds its consensus sequence, where it cleaves and resolves the cruciform DNA. The sequence is that of Crossover junction endodeoxyribonuclease RuvC from Bartonella tribocorum (strain CIP 105476 / IBS 506).